Reading from the N-terminus, the 331-residue chain is Cytoskeleton protein RodZ (331 aa).

Residues 1–111 are Cytoplasmic-facing; that stretch reads MNTEATQDHQ…LGKRRKKRDG (111 aa). The 53-residue stretch at 19–71 folds into the HTH cro/C1-type domain; sequence LRHAREQLGLSQQAVAERLCLKVSTVRDIEDDKAPADLASTFLRGYIRSYARL. Residues 30-49 constitute a DNA-binding region (H-T-H motif); it reads QQAVAERLCLKVSTVRDIED. The chain crosses the membrane as a helical; Signal-anchor for type II membrane protein span at residues 112–132; the sequence is WLMSFTWLVLFVVIGLSGAWW. Topologically, residues 133–331 are periplasmic; the sequence is WQDHKAQQEE…TLNAESSPAQ (199 aa). Residues 146–166 are compositionally biased toward polar residues; that stretch reads MADQSSAELNGGDANSQNVPL. The interval 146–238 is disordered; that stretch reads MADQSSAELN…ASPLPTDQAN (93 aa). 2 stretches are compositionally biased toward low complexity: residues 167–202 and 216–234; these read DTSA…TPAD and TAGT…PLPT.

It belongs to the RodZ family.

The protein localises to the cell inner membrane. In terms of biological role, cytoskeletal protein that is involved in cell-shape control through regulation of the length of the long axis. The chain is Cytoskeleton protein RodZ from Klebsiella pneumoniae subsp. pneumoniae (strain ATCC 700721 / MGH 78578).